The primary structure comprises 270 residues: Putative phosphoenolpyruvate synthase regulatory protein (270 aa).

Residue 150–157 (GVSRCGKT) participates in ADP binding.

The protein belongs to the pyruvate, phosphate/water dikinase regulatory protein family. PSRP subfamily.

It carries out the reaction [pyruvate, water dikinase] + ADP = [pyruvate, water dikinase]-phosphate + AMP + H(+). The enzyme catalyses [pyruvate, water dikinase]-phosphate + phosphate + H(+) = [pyruvate, water dikinase] + diphosphate. Its function is as follows. Bifunctional serine/threonine kinase and phosphorylase involved in the regulation of the phosphoenolpyruvate synthase (PEPS) by catalyzing its phosphorylation/dephosphorylation. This is Putative phosphoenolpyruvate synthase regulatory protein from Shewanella sediminis (strain HAW-EB3).